The primary structure comprises 1142 residues: Auxin response factor 5 (1142 aa).

The TF-B3 DNA-binding region spans 148–250; that stretch reads FCKTLTASDT…QLLLGIRRAN (103 aa). Residues 1009-1093 form the PB1 domain; that stretch reads RTFTKVYKRG…RCIRILSPQE (85 aa). Residues 1114-1142 are disordered; the sequence is SSSDGVNGWRPRCDQNPGNPSIGPYDQFE.

This sequence belongs to the ARF family. Homodimers and heterodimers. In terms of tissue distribution, expressed in roots, culms, leaves and young panicles.

It localises to the nucleus. Auxin response factors (ARFs) are transcriptional factors that bind specifically to the DNA sequence 5'-TGTCTC-3' found in the auxin-responsive promoter elements (AuxREs). The protein is Auxin response factor 5 (ARF5) of Oryza sativa subsp. japonica (Rice).